The primary structure comprises 365 residues: sn-glycerol-3-phosphate import ATP-binding protein UgpC (365 aa).

In terms of domain architecture, ABC transporter spans L4–I234. G36–S43 provides a ligand contact to ATP.

This sequence belongs to the ABC transporter superfamily. sn-glycerol-3-phosphate importer (TC 3.A.1.1.3) family. As to quaternary structure, the complex is composed of two ATP-binding proteins (UgpC), two transmembrane proteins (UgpA and UgpE) and a solute-binding protein (UgpB).

The protein resides in the cell inner membrane. It catalyses the reaction sn-glycerol 3-phosphate(out) + ATP + H2O = sn-glycerol 3-phosphate(in) + ADP + phosphate + H(+). Its function is as follows. Part of the ABC transporter complex UgpBAEC involved in sn-glycerol-3-phosphate (G3P) import. Responsible for energy coupling to the transport system. The chain is sn-glycerol-3-phosphate import ATP-binding protein UgpC from Ralstonia nicotianae (strain ATCC BAA-1114 / GMI1000) (Ralstonia solanacearum).